The primary structure comprises 515 residues: MDPRETTDPSLPPGPLTHLSLPDSSEVRLQSDGPSLLGSWTRSPPEHAIILREGVRTCLQQRCEQTVWILHAKVAQKSYGNEKRFFCPPPCVYLAGPGWRVKPMQDQALQSAETGPTVCGYMGLDGASGSAPETQKLNFEEQPDSREFGCAKTLYISDADKRKHFRLVLRLVLRGGQELGTFHSRLIKVISKPSQKKQSLKNTDLCISSGSKVSLFNRLRSQTVSTRYLSVEDGAFVASARQWAAFTLHLADGHCSQGDFPPQEGYIRYGSLVQLVCTVTGITLPPMIIRKVAKQCALLDVDEPISQLHKCAFQFPSDTPGGAGTYLCLATEKVVRFQASLCPKEANRALLNDSSCWTIIGTESVEFTFSTSLACTREPVTPVPLISTLELSGGGDVATLELHGENFHAGLKVWFGDVEAETMYRSPRSLVCVVPDVAAFGSDWRWLRTPITVPVSLLRADALFYPSPFSFTYTPEYSALPRLPNAQEPAPDADTLLESIHHEFTRTNFHLFCPT.

The tract at residues 1–40 (MDPRETTDPSLPPGPLTHLSLPDSSEVRLQSDGPSLLGSW) is disordered. DNA-binding regions lie at residues 76–86 (QKSYGNEKRFF), 191–196 (SKPSQK), and 218–223 (RLRSQT). The 91-residue stretch at 384 to 474 (PLISTLELSG…YPSPFSFTYT (91 aa)) folds into the IPT/TIG domain.

This sequence belongs to the Su(H) family. Interacts weakly with EBNA2. Does not interact with any Notch proteins. In terms of tissue distribution, highly expressed in lung. Also detected in spleen, and brain.

It is found in the nucleus. In terms of biological role, putative transcription factor, which cooperates with EBNA2 to activate transcription. The chain is Recombining binding protein suppressor of hairless-like protein (Rbpjl) from Mus musculus (Mouse).